Here is a 727-residue protein sequence, read N- to C-terminus: Catalase-peroxidase (727 aa).

Residues 1–21 (MDAKVEDNIAGKCPMGHGRGP) are disordered. Positions 95 to 217 (WHAAGTYRIT…LGAVQMGLIY (123 aa)) form a cross-link, tryptophyl-tyrosyl-methioninium (Trp-Tyr) (with M-243). Catalysis depends on H96, which acts as the Proton acceptor. The tryptophyl-tyrosyl-methioninium (Tyr-Met) (with W-95) cross-link spans 217–243 (YVNPEGPNGNPDPLASARDIRETFARM). Residue H258 participates in heme b binding.

It belongs to the peroxidase family. Peroxidase/catalase subfamily. In terms of assembly, homodimer or homotetramer. Heme b serves as cofactor. Formation of the three residue Trp-Tyr-Met cross-link is important for the catalase, but not the peroxidase activity of the enzyme.

The enzyme catalyses H2O2 + AH2 = A + 2 H2O. It carries out the reaction 2 H2O2 = O2 + 2 H2O. In terms of biological role, bifunctional enzyme with both catalase and broad-spectrum peroxidase activity. Important for stationary phase survival. This Caulobacter vibrioides (strain ATCC 19089 / CIP 103742 / CB 15) (Caulobacter crescentus) protein is Catalase-peroxidase.